The primary structure comprises 101 residues: Protein Tat (101 aa).

The segment covering 1–12 has biased composition (basic and acidic residues); the sequence is MEPVDPRLEPWK. The tract at residues 1–20 is disordered; that stretch reads MEPVDPRLEPWKHPGSQPKT. The interaction with human CREBBP stretch occupies residues 1–24; the sequence is MEPVDPRLEPWKHPGSQPKTACTT. Positions 1-48 are transactivation; the sequence is MEPVDPRLEPWKHPGSQPKTACTTCYCKKCCFHCQVCFTKKALGISYG. Positions 22, 25, and 27 each coordinate Zn(2+). The interval 22–37 is cysteine-rich; the sequence is CTTCYCKKCCFHCQVC. Lys-28 carries the N6-acetyllysine; by host PCAF modification. Zn(2+)-binding residues include Cys-30, His-33, Cys-34, and Cys-37. The core stretch occupies residues 38-48; it reads FTKKALGISYG. Positions 47 to 101 are disordered; sequence YGRKKRRQRRRAPEDSQTHQVSLPKQPAPQFRGDPTGPKESKKKVERETETHPVD. The Nuclear localization signal, RNA-binding (TAR), and protein transduction motif lies at 49–57; the sequence is RKKRRQRRR. The interval 49–86 is interaction with the host capping enzyme RNGTT; that stretch reads RKKRRQRRRAPEDSQTHQVSLPKQPAPQFRGDPTGPKE. Residues Lys-50 and Lys-51 each carry the N6-acetyllysine; by host EP300 and GCN5L2 modification. Residues Arg-52 and Arg-53 each carry the asymmetric dimethylarginine; by host PRMT6 modification. A Glycyl lysine isopeptide (Lys-Gly) (interchain with G-Cter in ubiquitin) cross-link involves residue Lys-71. The Cell attachment site motif lies at 78 to 80; that stretch reads RGD. Basic and acidic residues predominate over residues 83–101; the sequence is GPKESKKKVERETETHPVD.

It belongs to the lentiviruses Tat family. Interacts with host CCNT1. Associates with the P-TEFb complex composed at least of Tat, P-TEFb (CDK9 and CCNT1), TAR RNA, RNA Pol II. Recruits the HATs CREBBP, TAF1/TFIID, EP300, PCAF and GCN5L2. Interacts with host KAT5/Tip60; this interaction targets the latter to degradation. Interacts with the host deacetylase SIRT1. Interacts with host capping enzyme RNGTT; this interaction stimulates RNGTT. Binds to host KDR, and to the host integrins ITGAV/ITGB3 and ITGA5/ITGB1. Interacts with host KPNB1/importin beta-1 without previous binding to KPNA1/importin alpha-1. Interacts with EIF2AK2. Interacts with host nucleosome assembly protein NAP1L1; this interaction may be required for the transport of Tat within the nucleus, since the two proteins interact at the nuclear rim. Interacts with host C1QBP/SF2P32; this interaction involves lysine-acetylated Tat. Interacts with the host chemokine receptors CCR2, CCR3 and CXCR4. Interacts with host DPP4/CD26; this interaction may trigger an anti-proliferative effect. Interacts with host LDLR. Interacts with the host extracellular matrix metalloproteinase MMP1. Interacts with host PRMT6; this interaction mediates Tat's methylation. Interacts with, and is ubiquitinated by MDM2/Hdm2. Interacts with host PSMC3 and HTATIP2. Interacts with STAB1; this interaction may overcome SATB1-mediated repression of IL2 and IL2RA (interleukin) in T cells by binding to the same domain than HDAC1. Interacts (when acetylated) with human CDK13, thereby increasing HIV-1 mRNA splicing and promoting the production of the doubly spliced HIV-1 protein Nef. Interacts with host TBP; this interaction modulates the activity of transcriptional pre-initiation complex. Interacts with host RELA. Interacts with host PLSCR1; this interaction negatively regulates Tat transactivation activity by altering its subcellular distribution. In terms of processing, asymmetrical arginine methylation by host PRMT6 seems to diminish the transactivation capacity of Tat and affects the interaction with host CCNT1. Acetylation by EP300, CREBBP, GCN5L2/GCN5 and PCAF regulates the transactivation activity of Tat. EP300-mediated acetylation of Lys-50 promotes dissociation of Tat from the TAR RNA through the competitive binding to PCAF's bromodomain. In addition, the non-acetylated Tat's N-terminus can also interact with PCAF. PCAF-mediated acetylation of Lys-28 enhances Tat's binding to CCNT1. Lys-50 is deacetylated by SIRT1. Post-translationally, polyubiquitination by host MDM2 does not target Tat to degradation, but activates its transactivation function and fosters interaction with CCNT1 and TAR RNA. In terms of processing, phosphorylated by EIF2AK2 on serine and threonine residues adjacent to the basic region important for TAR RNA binding and function. Phosphorylation of Tat by EIF2AK2 is dependent on the prior activation of EIF2AK2 by dsRNA.

It localises to the host nucleus. Its subcellular location is the host nucleolus. It is found in the host cytoplasm. The protein resides in the secreted. Transcriptional activator that increases RNA Pol II processivity, thereby increasing the level of full-length viral transcripts. Recognizes a hairpin structure at the 5'-LTR of the nascent viral mRNAs referred to as the transactivation responsive RNA element (TAR) and recruits the cyclin T1-CDK9 complex (P-TEFb complex) that will in turn hyperphosphorylate the RNA polymerase II to allow efficient elongation. The CDK9 component of P-TEFb and other Tat-activated kinases hyperphosphorylate the C-terminus of RNA Pol II that becomes stabilized and much more processive. Other factors such as HTATSF1/Tat-SF1, SUPT5H/SPT5, and HTATIP2 are also important for Tat's function. Besides its effect on RNA Pol II processivity, Tat induces chromatin remodeling of proviral genes by recruiting the histone acetyltransferases (HATs) CREBBP, EP300 and PCAF to the chromatin. This also contributes to the increase in proviral transcription rate, especially when the provirus integrates in transcriptionally silent region of the host genome. To ensure maximal activation of the LTR, Tat mediates nuclear translocation of NF-kappa-B by interacting with host RELA. Through its interaction with host TBP, Tat may also modulate transcription initiation. Tat can reactivate a latently infected cell by penetrating in it and transactivating its LTR promoter. In the cytoplasm, Tat is thought to act as a translational activator of HIV-1 mRNAs. Its function is as follows. Extracellular circulating Tat can be endocytosed by surrounding uninfected cells via the binding to several surface receptors such as CD26, CXCR4, heparan sulfate proteoglycans (HSPG) or LDLR. Neurons are rarely infected, but they internalize Tat via their LDLR. Through its interaction with nuclear HATs, Tat is potentially able to control the acetylation-dependent cellular gene expression. Modulates the expression of many cellular genes involved in cell survival, proliferation or in coding for cytokines or cytokine receptors. Tat plays a role in T-cell and neurons apoptosis. Tat induced neurotoxicity and apoptosis probably contribute to neuroAIDS. Circulating Tat also acts as a chemokine-like and/or growth factor-like molecule that binds to specific receptors on the surface of the cells, affecting many cellular pathways. In the vascular system, Tat binds to ITGAV/ITGB3 and ITGA5/ITGB1 integrins dimers at the surface of endothelial cells and competes with bFGF for heparin-binding sites, leading to an excess of soluble bFGF. The polypeptide is Protein Tat (Human immunodeficiency virus type 1 group M subtype B (isolate MN) (HIV-1)).